We begin with the raw amino-acid sequence, 66 residues long: Phylloseptin-S1 (66 aa).

The N-terminal stretch at 1 to 22 (MAFLKKSLFLVLFLGLVSLSIC) is a signal peptide. Residues 23–46 (EEEKRETEEEEHDQEEDDKSEEKR) constitute a propeptide that is removed on maturation. A disordered region spans residues 25 to 44 (EKRETEEEEHDQEEDDKSEE). The span at 30–41 (EEEEHDQEEDDK) shows a compositional bias: acidic residues. Phenylalanine 65 bears the Phenylalanine amide mark.

As to expression, expressed by the skin glands.

The protein localises to the secreted. Its subcellular location is the target cell membrane. Functionally, antimicrobial peptide with high activity against Gram-positive bacteria, low activity against Gram-negative bacteria, and moderate activity against fungi. Acts on bacterial biofilms (S.aureus) with the same potency than on bacteria. Acts by causing bacterial membrane disruption inducing leakage of the intracellular content followed by cell death. It adopts an alpha-helical amphipathic structure in membrane environments. Also shows highly potent antiparasitic activity against Leishmania species. Shows low hemolytic activity on horse and human erythrocytes (LC(50)=39 uM). Is also active on human monocytes (IC(50)=23 uM). The polypeptide is Phylloseptin-S1 (Phyllomedusa sauvagei (Sauvage's leaf frog)).